The sequence spans 734 residues: Oligopeptide transporter 2 (734 aa).

The next 14 helical transmembrane spans lie at 44 to 64, 68 to 88, 125 to 145, 152 to 172, 211 to 231, 252 to 272, 283 to 303, 359 to 379, 414 to 434, 442 to 462, 525 to 545, 596 to 616, 644 to 664, and 677 to 697; these read MWFL…FFGY, PLMI…KLMA, GAGF…IMAF, FLAS…WAGI, FFVI…YLFL, LGSG…SVIA, FFAI…VIPI, FFAI…THVA, WWFY…CIFM, WWGL…VSII, MFLV…SVAW, YPAL…VWLL, ATSV…YFVF, and VLSA…YFSL.

Belongs to the oligopeptide OPT transporter (TC 2.A.67.1) family. As to expression, expressed in flowers, leaves, roots, and stems.

The protein localises to the membrane. Its function is as follows. Involved in the translocation of tetra- and pentapeptides across the cellular membrane in an energy-dependent manner. The sequence is that of Oligopeptide transporter 2 (OPT2) from Arabidopsis thaliana (Mouse-ear cress).